The primary structure comprises 383 residues: Histidine decarboxylase (383 aa).

Substrate is bound at residue histidine 120. Lysine 233 carries the post-translational modification N6-(pyridoxal phosphate)lysine.

The protein belongs to the group II decarboxylase family. As to quaternary structure, homotetramer. Pyridoxal 5'-phosphate serves as cofactor.

The catalysed reaction is L-histidine + H(+) = histamine + CO2. The chain is Histidine decarboxylase from Acinetobacter baumannii (strain AB307-0294).